We begin with the raw amino-acid sequence, 1118 residues long: Protein argonaute 1B (1118 aa).

2 disordered regions span residues 1–175 (MALQ…SRTV) and 188–246 (APMV…RFPL). A compositionally biased stretch (basic residues) spans 10 to 24 (PHHHQVPIMVKKKRT). The span at 25-35 (GSGSTGESSGE) shows a compositional bias: low complexity. Composition is skewed to gly residues over residues 54 to 92 (QHGG…HHPG), 100 to 110 (GRGGPGSHHPG), and 118 to 128 (GRGGSGSHHPG). Composition is skewed to low complexity over residues 148 to 157 (RGGMPQPYYG) and 193 to 219 (PTPS…QFQQ). Polar residues predominate over residues 220 to 241 (LATRDQSSTSQAIQIAPPSSKS). One can recognise a PAZ domain in the interval 457 to 570 (PVIDFVAQLL…LPMEVCKIVE (114 aa)). The Piwi domain occupies 746–1067 (LLIVILPDNN…AAFRARFYME (322 aa)).

The protein belongs to the argonaute family. Ago subfamily.

Its function is as follows. Probably involved in the RNA silencing pathway. May bind to short RNAs such as microRNAs (miRNAs) or short interfering RNAs (siRNAs), and represses the translation of mRNAs which are complementary to them. The polypeptide is Protein argonaute 1B (AGO1B) (Oryza sativa subsp. japonica (Rice)).